The primary structure comprises 123 residues: Histone H2B (123 aa).

The interval 1–30 (MPPKTSGKAAKKAGKAQKNITKTDKKKKRR) is disordered. P2 carries the N-methylproline; partial modification. K44 carries the post-translational modification N6-succinyllysine. O-linked (GlcNAc) serine glycosylation is present at S110. N6-succinyllysine is present on residues K114 and K118. Residue K118 forms a Glycyl lysine isopeptide (Lys-Gly) (interchain with G-Cter in ubiquitin) linkage.

This sequence belongs to the histone H2B family. As to quaternary structure, the nucleosome is a histone octamer containing two molecules each of H2A, H2B, H3 and H4 assembled in one H3-H4 heterotetramer and two H2A-H2B heterodimers. The octamer wraps approximately 147 bp of DNA. Post-translationally, phosphorylated by the catalytic component of the Dbf4-dependent kinase (DDK) complex Cdc7. Monoubiquitination of Lys-118 by Bre1 gives a specific tag for epigenetic transcriptional activation and is also prerequisite for histone H3 'Lys-4' and 'Lys-79' methylation. Deubiquitination of Lys-118 by the SAGA complex is involved in activating transcription of a large subset of genes. In terms of processing, methylation at Pro-2 increases upon heat shock. Post-translationally, glcNAcylation at Ser-110 promotes monoubiquitination of Lys-118. It fluctuates in response to extracellular glucose, and associates with transcribed genes.

Its subcellular location is the nucleus. The protein resides in the chromosome. Functionally, core component of nucleosome. Nucleosomes wrap and compact DNA into chromatin, limiting DNA accessibility to the cellular machineries which require DNA as a template. Histones thereby play a central role in transcription regulation, DNA repair, DNA replication and chromosomal stability. DNA accessibility is regulated via a complex set of post-translational modifications of histones, also called histone code, and nucleosome remodeling. The sequence is that of Histone H2B (His2B) from Drosophila yakuba (Fruit fly).